A 333-amino-acid chain; its full sequence is Tryptophan--tRNA ligase (333 aa).

Residues 11-13 (QPS) and 19-20 (GN) contribute to the ATP site. The 'HIGH' region signature appears at 12 to 20 (PSGELTIGN). D135 contacts L-tryptophan. ATP is bound by residues 147–149 (GED), V186, and 195–199 (KMSKS). Positions 195-199 (KMSKS) match the 'KMSKS' region motif.

This sequence belongs to the class-I aminoacyl-tRNA synthetase family. Homodimer.

The protein localises to the cytoplasm. The enzyme catalyses tRNA(Trp) + L-tryptophan + ATP = L-tryptophyl-tRNA(Trp) + AMP + diphosphate + H(+). Catalyzes the attachment of tryptophan to tRNA(Trp). The polypeptide is Tryptophan--tRNA ligase (Pasteurella multocida (strain Pm70)).